Here is a 163-residue protein sequence, read N- to C-terminus: UPF0262 protein RPD_4278 (163 aa).

It belongs to the UPF0262 family.

This Rhodopseudomonas palustris (strain BisB5) protein is UPF0262 protein RPD_4278.